The sequence spans 151 residues: Ribosomal RNA large subunit methyltransferase H (151 aa).

Residues L73, G100, and 119–124 (LSKMTM) each bind S-adenosyl-L-methionine.

This sequence belongs to the RNA methyltransferase RlmH family. In terms of assembly, homodimer.

It localises to the cytoplasm. The catalysed reaction is pseudouridine(1915) in 23S rRNA + S-adenosyl-L-methionine = N(3)-methylpseudouridine(1915) in 23S rRNA + S-adenosyl-L-homocysteine + H(+). Its function is as follows. Specifically methylates the pseudouridine at position 1915 (m3Psi1915) in 23S rRNA. This Campylobacter concisus (strain 13826) protein is Ribosomal RNA large subunit methyltransferase H.